Reading from the N-terminus, the 558-residue chain is Potassium-transporting ATPase potassium-binding subunit (558 aa).

The next 12 membrane-spanning stretches (helical) occupy residues 1–21 (MSIVLFLIVFILLSLIVSRYL), 60–80 (IKHFLLFNGLMGGLSFVLLLI), 129–149 (VITFLMFTSAASGYAVCIAML), 169–189 (FIVRVLIPFALIISLFLISQG), 246–266 (WSNYAEALSMMLIPGSLVFLF), 281–301 (IMIFVAMFVMFIGFLVTCLYF), 326–346 (FGIGLSALFTTITTAFTTGTV), 353–373 (LTPLGGMVPMVLMMLNAVFGG), 376–396 (VGLMNMLIYVMLTVFICSLMI), 415–435 (IALSFLVHPLLILVFSALAFI), 485–505 (IVMLLARYIPIVLQILIVSSL), and 523–543 (LFFSSVLIIFIILLSGLTFLP).

The protein belongs to the KdpA family. In terms of assembly, the system is composed of three essential subunits: KdpA, KdpB and KdpC.

It is found in the cell membrane. Part of the high-affinity ATP-driven potassium transport (or Kdp) system, which catalyzes the hydrolysis of ATP coupled with the electrogenic transport of potassium into the cytoplasm. This subunit binds the extracellular potassium ions and delivers the ions to the membrane domain of KdpB through an intramembrane tunnel. The chain is Potassium-transporting ATPase potassium-binding subunit from Staphylococcus haemolyticus (strain JCSC1435).